A 289-amino-acid polypeptide reads, in one-letter code: MDKVLLGCHVSMNKQNNYLVGSVNEAISYKANTFMIFTGPPQSTLRTNTNHLYINQMHELMNSYKIDAKDLVVHAPYIINIANSVDQNKWEFAVNFLIQEIKRCEEIKIPTLVLHPGSYTTGNYKDSLNQIIKALDMVSNYQVNVKIALETMSGKGTEVCSKLEDFKYILDNVKNKDKVGVCLDTCHLHDAGYDLSKWTEFKEQIKQNFNLDKVLCIHLNDSKNMISSHKDRHANIGYGFVGFDTLVNVVFDKDFSNISKILETPYIDKKAPYKIEIEDLLNKTFTNRL.

Zn(2+) contacts are provided by His-74, His-115, Glu-150, Asp-184, His-187, His-218, Asp-231, His-233, and Glu-263.

Belongs to the AP endonuclease 2 family. It depends on Zn(2+) as a cofactor.

The catalysed reaction is Endonucleolytic cleavage to 5'-phosphooligonucleotide end-products.. Its function is as follows. Endonuclease IV plays a role in DNA repair. It cleaves phosphodiester bonds at apurinic or apyrimidinic (AP) sites, generating a 3'-hydroxyl group and a 5'-terminal sugar phosphate. The chain is Probable endonuclease 4 from Mycoplasma capricolum subsp. capricolum (strain California kid / ATCC 27343 / NCTC 10154).